Reading from the N-terminus, the 156-residue chain is Adult-specific rigid cuticular protein 15.5 (156 aa).

The Chitin-binding type R&amp;R domain occupies 23–84 (IGNYAFNYGT…SVKTNEPGTA (62 aa)).

In terms of biological role, component of the rigid cuticle of the spider. This Araneus diadematus (European garden spider) protein is Adult-specific rigid cuticular protein 15.5.